A 545-amino-acid chain; its full sequence is Chaperonin GroEL (545 aa).

Residues 30–33 (TLGP), Lys-51, 87–91 (DGTTT), Gly-415, 479–481 (NAA), and Asp-495 contribute to the ATP site. The segment at 526-545 (KEDKPDLGNAGAGGNMGGMM) is disordered. The segment covering 535–545 (AGAGGNMGGMM) has biased composition (gly residues).

This sequence belongs to the chaperonin (HSP60) family. As to quaternary structure, forms a cylinder of 14 subunits composed of two heptameric rings stacked back-to-back. Interacts with the co-chaperonin GroES.

It is found in the cytoplasm. It catalyses the reaction ATP + H2O + a folded polypeptide = ADP + phosphate + an unfolded polypeptide.. In terms of biological role, together with its co-chaperonin GroES, plays an essential role in assisting protein folding. The GroEL-GroES system forms a nano-cage that allows encapsulation of the non-native substrate proteins and provides a physical environment optimized to promote and accelerate protein folding. This is Chaperonin GroEL from Blochmanniella pennsylvanica (strain BPEN).